Here is a 441-residue protein sequence, read N- to C-terminus: T-box transcription factor TBX20 (441 aa).

The segment at residues 103-282 (LWDKFHDLGT…SNPFAKGFRD (180 aa)) is a DNA-binding region (T-box).

As to expression, expressed throughout all cardiac tissue during later stages of development. Also expressed in the cement gland, jugular vein, lung bud, cloacal aperture, rhombomeres 2, 4, 6 and 8 and in a subset of motor neurons.

The protein localises to the nucleus. Functionally, transcriptional regulator that may be involved in heart developmental processes. The sequence is that of T-box transcription factor TBX20 (tbx20) from Xenopus laevis (African clawed frog).